We begin with the raw amino-acid sequence, 259 residues long: Deoxyribose-phosphate aldolase (259 aa).

D102 (proton donor/acceptor) is an active-site residue. Residue K167 is the Schiff-base intermediate with acetaldehyde of the active site. Residue K201 is the Proton donor/acceptor of the active site.

It belongs to the DeoC/FbaB aldolase family. DeoC type 2 subfamily.

The protein resides in the cytoplasm. The enzyme catalyses 2-deoxy-D-ribose 5-phosphate = D-glyceraldehyde 3-phosphate + acetaldehyde. The protein operates within carbohydrate degradation; 2-deoxy-D-ribose 1-phosphate degradation; D-glyceraldehyde 3-phosphate and acetaldehyde from 2-deoxy-alpha-D-ribose 1-phosphate: step 2/2. Its function is as follows. Catalyzes a reversible aldol reaction between acetaldehyde and D-glyceraldehyde 3-phosphate to generate 2-deoxy-D-ribose 5-phosphate. The chain is Deoxyribose-phosphate aldolase from Serratia proteamaculans (strain 568).